Reading from the N-terminus, the 364-residue chain is Aminomethyltransferase (364 aa).

It belongs to the GcvT family. As to quaternary structure, the glycine cleavage system is composed of four proteins: P, T, L and H.

It catalyses the reaction N(6)-[(R)-S(8)-aminomethyldihydrolipoyl]-L-lysyl-[protein] + (6S)-5,6,7,8-tetrahydrofolate = N(6)-[(R)-dihydrolipoyl]-L-lysyl-[protein] + (6R)-5,10-methylene-5,6,7,8-tetrahydrofolate + NH4(+). The glycine cleavage system catalyzes the degradation of glycine. In Shewanella sediminis (strain HAW-EB3), this protein is Aminomethyltransferase.